A 267-amino-acid polypeptide reads, in one-letter code: GTP cyclohydrolase FolE2 (267 aa).

Belongs to the GTP cyclohydrolase IV family.

It catalyses the reaction GTP + H2O = 7,8-dihydroneopterin 3'-triphosphate + formate + H(+). It participates in cofactor biosynthesis; 7,8-dihydroneopterin triphosphate biosynthesis; 7,8-dihydroneopterin triphosphate from GTP: step 1/1. Its function is as follows. Converts GTP to 7,8-dihydroneopterin triphosphate. The polypeptide is GTP cyclohydrolase FolE2 (Cupriavidus necator (strain ATCC 17699 / DSM 428 / KCTC 22496 / NCIMB 10442 / H16 / Stanier 337) (Ralstonia eutropha)).